The chain runs to 247 residues: Geranylgeranylglyceryl phosphate synthase (247 aa).

Positions 23 and 52 each coordinate Mg(2+). Sn-glycerol 1-phosphate contacts are provided by residues 171–177 (YLEAGSG), 203–204 (GG), and 225–226 (GT).

Belongs to the GGGP/HepGP synthase family. Group II subfamily. It depends on Mg(2+) as a cofactor.

It is found in the cytoplasm. It catalyses the reaction sn-glycerol 1-phosphate + (2E,6E,10E)-geranylgeranyl diphosphate = sn-3-O-(geranylgeranyl)glycerol 1-phosphate + diphosphate. It participates in membrane lipid metabolism; glycerophospholipid metabolism. Prenyltransferase that catalyzes the transfer of the geranylgeranyl moiety of geranylgeranyl diphosphate (GGPP) to the C3 hydroxyl of sn-glycerol-1-phosphate (G1P). This reaction is the first ether-bond-formation step in the biosynthesis of archaeal membrane lipids. This chain is Geranylgeranylglyceryl phosphate synthase, found in Methanosarcina barkeri (strain Fusaro / DSM 804).